A 402-amino-acid polypeptide reads, in one-letter code: MTLTKMEVDSTKGEGFRPYYITKIEELQLIVAEKSQNLRRLQAQRNELNAKVRMLREELQLLQEQGSYVGEVVKPMDKKKVLVKVHPEGKFVVDLDKNVDINDVTANCRVALRNESYTLHKILPNKVDPLVSLMMVEKVPDSTYEMVGGLDKQIKEIKEVIELPVKHPELFDALGIAQPKGVLLYGPPGTGKTLLARAVAHHTECTFIRVSGSELVQKFIGEGSRMVRELFVMAREHAPSIIFMDEIDSIGSSRIESGSGGDSEVQRTMLELLNQLDGFEATKNIKVIMATNRIDILDPALLRPGRIDRKIEFPPPNEEARLDILKIHSRKMNLTRGINLRKIAELMPGASGAEVKGVCTEAGMYALRERRVHVTQEDFEMAVAKVMQKDSEKNMSIKKLWK.

ATP is bound at residue 186–193 (GPPGTGKT).

This sequence belongs to the AAA ATPase family.

It localises to the cytoplasm. The protein resides in the nucleus. In terms of biological role, the 26S proteasome is involved in the ATP-dependent degradation of ubiquitinated proteins. The regulatory (or ATPase) complex confers ATP dependency and substrate specificity to the 26S complex. This chain is 26S proteasome regulatory subunit 8, found in Manduca sexta (Tobacco hawkmoth).